A 190-amino-acid chain; its full sequence is Probable E3 ubiquitin-protein ligase RHB1A (190 aa).

The RING-type; atypical zinc finger occupies 139 to 180; it reads CPICFEDYDVENPRLTTKCEHEFHLSCLLEWIERSDRCPICD.

It catalyses the reaction S-ubiquitinyl-[E2 ubiquitin-conjugating enzyme]-L-cysteine + [acceptor protein]-L-lysine = [E2 ubiquitin-conjugating enzyme]-L-cysteine + N(6)-ubiquitinyl-[acceptor protein]-L-lysine.. It functions in the pathway protein modification; protein ubiquitination. Its function is as follows. Probable E3 ubiquitin-protein ligase that may possess E3 ubiquitin ligase activity in vitro. The chain is Probable E3 ubiquitin-protein ligase RHB1A from Arabidopsis thaliana (Mouse-ear cress).